Reading from the N-terminus, the 172-residue chain is RNA pyrophosphohydrolase (172 aa).

Positions 8–153 (QHRPNVGVVL…KRGVYEAVVA (146 aa)) constitute a Nudix hydrolase domain. The Nudix box signature appears at 43-64 (GGVDEGEDLEVAARRELAEETG).

This sequence belongs to the Nudix hydrolase family. RppH subfamily. It depends on a divalent metal cation as a cofactor.

Functionally, accelerates the degradation of transcripts by removing pyrophosphate from the 5'-end of triphosphorylated RNA, leading to a more labile monophosphorylated state that can stimulate subsequent ribonuclease cleavage. The sequence is that of RNA pyrophosphohydrolase from Caulobacter vibrioides (strain ATCC 19089 / CIP 103742 / CB 15) (Caulobacter crescentus).